The following is a 140-amino-acid chain: Arsenate-mycothiol transferase ArsC1 (140 aa).

Belongs to the low molecular weight phosphotyrosine protein phosphatase family.

Its subcellular location is the cytoplasm. It catalyses the reaction mycothiol + arsenate = arseno-mycothiol + H2O. Functionally, involved in defense against toxic arsenate. Involved in the mycothiol/myoredoxin redox pathway which uses a mycothioltransferase mechanism; facilitates adduct formation between arsenate and mycothiol. This chain is Arsenate-mycothiol transferase ArsC1 (arsC1), found in Corynebacterium glutamicum (strain ATCC 13032 / K051).